We begin with the raw amino-acid sequence, 874 residues long: Alanine--tRNA ligase (874 aa).

Residues histidine 564, histidine 568, cysteine 665, and histidine 669 each coordinate Zn(2+).

It belongs to the class-II aminoacyl-tRNA synthetase family. Requires Zn(2+) as cofactor.

It is found in the cytoplasm. The catalysed reaction is tRNA(Ala) + L-alanine + ATP = L-alanyl-tRNA(Ala) + AMP + diphosphate. Catalyzes the attachment of alanine to tRNA(Ala) in a two-step reaction: alanine is first activated by ATP to form Ala-AMP and then transferred to the acceptor end of tRNA(Ala). Also edits incorrectly charged Ser-tRNA(Ala) and Gly-tRNA(Ala) via its editing domain. This chain is Alanine--tRNA ligase, found in Cupriavidus necator (strain ATCC 17699 / DSM 428 / KCTC 22496 / NCIMB 10442 / H16 / Stanier 337) (Ralstonia eutropha).